Here is a 468-residue protein sequence, read N- to C-terminus: ATP synthase subunit beta (468 aa).

An ATP-binding site is contributed by 155 to 162; that stretch reads GGAGVGKT.

Belongs to the ATPase alpha/beta chains family. In terms of assembly, F-type ATPases have 2 components, CF(1) - the catalytic core - and CF(0) - the membrane proton channel. CF(1) has five subunits: alpha(3), beta(3), gamma(1), delta(1), epsilon(1). CF(0) has three main subunits: a(1), b(2) and c(9-12). The alpha and beta chains form an alternating ring which encloses part of the gamma chain. CF(1) is attached to CF(0) by a central stalk formed by the gamma and epsilon chains, while a peripheral stalk is formed by the delta and b chains.

Its subcellular location is the cell membrane. It carries out the reaction ATP + H2O + 4 H(+)(in) = ADP + phosphate + 5 H(+)(out). Its function is as follows. Produces ATP from ADP in the presence of a proton gradient across the membrane. The catalytic sites are hosted primarily by the beta subunits. This chain is ATP synthase subunit beta, found in Streptococcus pyogenes serotype M49 (strain NZ131).